A 195-amino-acid polypeptide reads, in one-letter code: UPF0314 protein RHECIAT_CH0004233 (195 aa).

4 helical membrane passes run 15–35 (FWFV…YLMG), 64–84 (WYTP…YLIL), 127–147 (GDSI…FFFA), and 150–170 (APVA…GYVI).

The protein belongs to the UPF0314 family.

It localises to the cell membrane. In Rhizobium etli (strain CIAT 652), this protein is UPF0314 protein RHECIAT_CH0004233.